The sequence spans 28 residues: Dermaseptin-DI2 (28 aa).

Expressed by the skin glands.

Its subcellular location is the secreted. Its function is as follows. Has antibacterial activity against the Gram-positive bacteria S.aureus and E.faecalis, and the Gram-negative bacteria P.aeruginosa and E.coli. Has antiprotozoal activity against T.cruzi. Has antifungal activity against the yeasts C.tropicalis (MIC=10.9 uM), C.guilliermondii (MIC=21.8 uM), C.albicans (MIC=21.8 uM) and C.albicans ATCC 1023 (MIC=10.9 uM). Decreases viability of murine peritoneal cells. Fuses to, and disrupts liposomes. The chain is Dermaseptin-DI2 from Phyllomedusa distincta (Monkey frog).